An 895-amino-acid chain; its full sequence is Eukaryotic translation initiation factor 3 subunit C (895 aa).

Positions 1–108 (MSGFFRKVGD…DSDSEEEVKK (108 aa)) are disordered. 2 stretches are compositionally biased toward acidic residues: residues 11-31 (SDSE…ESGD) and 52-75 (DDSD…DDDN). Positions 638 to 812 (FHMHINLELL…NVVSFHRLEL (175 aa)) constitute a PCI domain. Positions 838 to 860 (DAKLGEGKEQRSGAGGERGDREG) are enriched in basic and acidic residues. The interval 838-895 (DAKLGEGKEQRSGAGGERGDREGGQPGGRRERRGGSAARGRGRGRGRAQQFQALGQKV) is disordered. A compositionally biased stretch (low complexity) spans 884–895 (RAQQFQALGQKV).

This sequence belongs to the eIF-3 subunit C family. As to quaternary structure, component of the eukaryotic translation initiation factor 3 (eIF-3) complex.

It localises to the cytoplasm. In terms of biological role, component of the eukaryotic translation initiation factor 3 (eIF-3) complex, which is involved in protein synthesis of a specialized repertoire of mRNAs and, together with other initiation factors, stimulates binding of mRNA and methionyl-tRNAi to the 40S ribosome. The eIF-3 complex specifically targets and initiates translation of a subset of mRNAs involved in cell proliferation. The chain is Eukaryotic translation initiation factor 3 subunit C from Mycosarcoma maydis (Corn smut fungus).